A 741-amino-acid polypeptide reads, in one-letter code: NUT family member 2G (741 aa).

Disordered regions lie at residues 172–200, 293–375, 391–424, 496–624, and 638–741; these read PGNAGPWPQGAHGEGSLAPSQAKARPDDS, IQKS…PEEI, LGSHPGDTGEPEGQREKGKVEQPQEEDGMTSDPG, RAAP…LPGM, and RLSQ…HCSQ. A compositionally biased stretch (pro residues) spans 304–321; it reads SLPPPAPPRLEPRGPPAP. The span at 402–412 shows a compositional bias: basic and acidic residues; that stretch reads EGQREKGKVEQ. The segment covering 528 to 545 has biased composition (polar residues); that stretch reads QRVSVETSPPQTAAQDPQ. The segment covering 639 to 650 has biased composition (low complexity); sequence LSQSPVPSSGLL. Residues 731–741 show a composition bias toward basic residues; that stretch reads SRRKKKRHCSQ.

Belongs to the NUT family.

This chain is NUT family member 2G (NUTM2G), found in Homo sapiens (Human).